Reading from the N-terminus, the 262-residue chain is UPF0739 protein C1orf74 homolog (262 aa).

Belongs to the UPF0739 family.

The protein is UPF0739 protein C1orf74 homolog of Xenopus laevis (African clawed frog).